Consider the following 216-residue polypeptide: DNA-binding protein HupB (216 aa).

A propeptide (removed; alternate) is located at residue Gly-2. Met-3 is subject to N-acetylmethionine. The bacterial histone-like domain stretch occupies residues 3 to 92 (MNKAELIDVL…PGAQFKAVVS (90 aa)). N6-acetyllysine occurs at positions 5, 74, 88, 105, 118, and 135. The tract at residues 102 to 216 (PAVKRGVGAS…KKATARRGRK (115 aa)) is disordered. The interval 103 to 216 (AVKRGVGASA…KKATARRGRK (114 aa)) is degenerate repeats region. Over residues 104 to 114 (VKRGVGASAAK) the composition is skewed to low complexity. Residues 115–216 (KVAKKAPAKK…KKATARRGRK (102 aa)) are compositionally biased toward basic residues. Residue Lys-140 is modified to N6,N6,N6-trimethyllysine. 2 positions are modified to N6-acetyllysine: Lys-148 and Lys-169.

It belongs to the bacterial histone-like protein family. Long actinobacterial subfamily. In terms of assembly, oligomerizes. Interacts with topoisomerase 1 (topA). Interacts with Eis. Interacts with antigen 85 proteins (fbpA, fbpB, fbpC). In terms of processing, probably acetylated by Eis in vivo. In vitro acetylated by Eis (strain H37Rv and H37Ra) on many more residues than those identified in vivo. Deacetylated in vitro by NAD-dependent protein deacylase (Rv1151c). Trimethylated on Lys-140 by human SUV39H1; trimethylation inhibits mycobacterial growth. SUV39H1 probably also trimethylates another residue. Post-translationally, probably succinylated by Rv0802c and desuccinylated by NAD-dependent protein deacylase (Rv1151c).

Its subcellular location is the cytoplasm. The protein resides in the nucleoid. It localises to the secreted. It is found in the cell wall. The enzyme catalyses 4 Fe(2+) + O2 + 4 H(+) = 4 Fe(3+) + 2 H2O. Functionally, a nucleoid-associated protein (NAP) that probably plays a role in chromosome compactation. Binds DNA non-specifically, with greater affinity for supercoiled than linear DNA, binds well to nicked DNA, gapped and cruciform DNA. Has a preference for A:T rich DNA. Required for activation of the mtbB operon. Binds the mtbB promoter in the presence of iron, binding is seen with as little as 25 uM Fe(2+) and increases with increasing Fe(2+). RNase E and HupB jointly contribute to cellular adaptation to changing growth conditions and survival during antibiotic treatment and in the host. Plays a role in stress survival. Stimulates supercoiling relaxation by topoisomerase 1 (Top1, topA). Its function is as follows. Binds Fe(3+) but not Fe(2+). Has ferroxidase activity, converts Fe(2+) into Fe(3+) and in the presence of H(2)O(2) prevents the generation of hydroxyl radicals (the Fenton reaction). Protects DNA from damage in the presence of FeSO(4) and H(2)O(2). May function in iron storage. Involved in iron uptake by bacteria (either Fe(3+) or extracellular carboxymycobactin); antibodies against HupB block uptake of both. Following uptake iron is mostly found in the iron siderophores carboxymycobactin (CMb, extracellular) or mycobactin (Mb, lipophilic). Facilitates transfer of iron from CMb to Mb when liposomes plus a cell wall lysate are incubated with CMb. Binds iron, ferri-CMb and ferri-Mb; has 10-fold higher affinity for ferri-Mb. Suggested to transfer iron from CBm to Mb at the cell membrane. Required for biofilm formation; trimethylation by recombinant human SUV39H1 (a histone methyltransferase) inhibits biofilm formation. Induces lymphoproliferation, particularly in health tuberculin reactors, and is immunogenic. Maybe involved in pathogenesis of inflammatory bowel disease (IBD) in patients with ulcerative colitis and Crohn disease (CD). Bound by anti-neutrophil cytoplasmic antibodies (pANCA), which are a hallmark of IBD. The binding is due to pANCA directed against H1-3 cross-reacting with DBH epitopes. In CD, target of a strong IgA response. In terms of biological role, may play a role in cell wall assembly. In vitro at low levels enhances formation of TMM and TDM by antigen 85 proteins (fbpA, fbpB, fbpC), at higher levels inhibits TMM and TDM formation. The chain is DNA-binding protein HupB from Mycobacterium tuberculosis (strain ATCC 25618 / H37Rv).